The chain runs to 81 residues: Spore coat protein F-like protein YraG (81 aa).

Belongs to the CotF family.

The protein resides in the spore coat. This Bacillus subtilis (strain 168) protein is Spore coat protein F-like protein YraG (yraG).